The sequence spans 474 residues: 6-phospho-beta-galactosidase (474 aa).

Positions 19, 116, 159, 160, and 297 each coordinate D-galactose 6-phosphate. Glu160 serves as the catalytic Proton donor. Glu375 (nucleophile) is an active-site residue. Residues Ser433, Trp434, Lys440, and Tyr442 each coordinate D-galactose 6-phosphate.

This sequence belongs to the glycosyl hydrolase 1 family.

It carries out the reaction a 6-phospho-beta-D-galactoside + H2O = D-galactose 6-phosphate + an alcohol. The protein operates within carbohydrate metabolism; lactose degradation; D-galactose 6-phosphate and beta-D-glucose from lactose 6-phosphate: step 1/1. This chain is 6-phospho-beta-galactosidase, found in Lacticaseibacillus casei (Lactobacillus casei).